The primary structure comprises 102 residues: Probable non-specific lipid-transfer protein (102 aa).

The signal sequence occupies residues 1–35 (MAMAMGMAMRKEAAVAVMMVMVVTLAAGADAGAGA). Cystine bridges form between cysteine 37-cysteine 71, cysteine 45-cysteine 59, cysteine 60-cysteine 95, and cysteine 69-cysteine 102.

The protein belongs to the plant LTP family. B11E subfamily. Aleurone.

Potential phospholipid transfer protein. The sequence is that of Probable non-specific lipid-transfer protein (LTP2) from Hordeum vulgare (Barley).